Here is a 908-residue protein sequence, read N- to C-terminus: 26S proteasome non-ATPase regulatory subunit 2 (908 aa).

Residue M1 is modified to N-acetylmethionine. The tract at residues 1-52 (MEEGGRDKAPLQPQQPPATSPGSGDEKPSGKERRDAGDKDKEQELSEEDKQL) is disordered. Residues 24-52 (GDEKPSGKERRDAGDKDKEQELSEEDKQL) show a composition bias toward basic and acidic residues. Phosphoserine occurs at positions 29 and 147. Y194 carries the post-translational modification Phosphotyrosine. Phosphoserine is present on residues S361 and S363. PC repeat units lie at residues 409 to 442 (SAAASLGMILLWDVDGGLTQIDKYLYSSEDYIKS), 443 to 479 (GALLACGIVNSGVRNECDPALALLSDYVLHNSNTMRL), 480 to 514 (GSIFGLGLAYAGSNREDVLTLLLPVMGDSKSSMEV), 517 to 551 (VTALACGMIAVGSCNGDVTSTILQTIMEKSETELK), and 560 to 589 (LGLGLNHLGKGEAIEAILAALEVVSEPFRS). N6-acetyllysine is present on K551. Over residues 623 to 643 (KEKEEDKDKKEKKDKDKKEAP) the composition is skewed to basic and acidic residues. The segment at 623–645 (KEKEEDKDKKEKKDKDKKEAPAD) is disordered. PC repeat units lie at residues 692–723 (LALALISVSNPRLNILDTLSKFSHDADPEVSY) and 742–757 (AAMLRQLAQYHAKDPN). Positions 708 to 903 (DTLSKFSHDA…LEGFVILRKN (196 aa)) are required for interaction with UBLCP1.

It belongs to the proteasome subunit S2 family. In terms of assembly, component of the 19S proteasome regulatory particle complex. The 26S proteasome consists of a 20S core particle (CP) and two 19S regulatory subunits (RP). The regulatory particle is made of a lid composed of 9 subunits, a base containing 6 ATPases and few additional components including PSMD2. Interacts with RPGRIP1L. Interacts with CRY1 in a KDM8-dependent manner. Interacts (via C-terminus) with phosphatase UBLCP1 (via ubiquitin-like domain); the interaction recruits UBLCP1 to the 19S regulatory particle where it dephosphorylates 19S subunit PSMC2/RPT1 which impairs PSMC2 ATPase activity and disrupts 26S proteasome assembly.

In terms of biological role, component of the 26S proteasome, a multiprotein complex involved in the ATP-dependent degradation of ubiquitinated proteins. This complex plays a key role in the maintenance of protein homeostasis by removing misfolded or damaged proteins, which could impair cellular functions, and by removing proteins whose functions are no longer required. Therefore, the proteasome participates in numerous cellular processes, including cell cycle progression, apoptosis, or DNA damage repair. Its function is as follows. Binds to the intracellular domain of tumor necrosis factor type 1 receptor. The binding domain of TRAP1 and TRAP2 resides outside the death domain of TNFR1. The polypeptide is 26S proteasome non-ATPase regulatory subunit 2 (PSMD2) (Bos taurus (Bovine)).